Reading from the N-terminus, the 430-residue chain is Probable proton-coupled zinc antiporter SLC30A4 (430 aa).

At 1–113 the chain is on the cytoplasmic side; that stretch reads MAGPGAWKRL…LLKQRKVKTR (113 aa). Phosphoserine is present on Ser36. Residues 114 to 134 form a helical membrane-spanning segment; the sequence is LTIAAVLYLLFMIGELVGGYM. Topologically, residues 135-143 are lumenal; that stretch reads ANSLAIMTD. A helical transmembrane segment spans residues 144 to 164; that stretch reads ALHMLTDLSAIILTLLALWLS. His146 and Asp150 together coordinate Zn(2+). Residues 165-178 lie on the Cytoplasmic side of the membrane; it reads SKSPTRRFTFGFHR. A helical transmembrane segment spans residues 179 to 199; that stretch reads LEVLSAMISVMLVYVLMGFLL. At 200-216 the chain is on the lumenal side; sequence YEAVQRTIHMNYEINGD. Residues 217–237 form a helical membrane-spanning segment; the sequence is VMLITAAVGVAVNVIMGFLLN. Residues 238–275 are Cytoplasmic-facing; it reads QSGHHHSHAHSHSLPSNSPSMVSSGHNHGQDSLAVRAA. The interval 240-265 is zinc binding; that stretch reads GHHHSHAHSHSLPSNSPSMVSSGHNH. Residues 245-264 are disordered; it reads HAHSHSLPSNSPSMVSSGHN. Positions 249-263 are enriched in low complexity; it reads HSLPSNSPSMVSSGH. The helical transmembrane segment at 276–296 threads the bilayer; that stretch reads FVHALGDLVQSVGVLIAAYII. Residues His278 and Asp282 each coordinate Zn(2+). Over 297 to 311 the chain is Lumenal; the sequence is RFKPEYKIADPICTY. A helical transmembrane segment spans residues 312–332; sequence IFSLLVAFTTFRIIWDTVVII. The Cytoplasmic segment spans residues 333-430; it reads LEGVPSHLNV…TCANCHSSST (98 aa).

This sequence belongs to the cation diffusion facilitator (CDF) transporter (TC 2.A.4) family. SLC30A subfamily. Homodimerization could regulate efficiency for zinc transport. Interacts with TMEM163. In terms of tissue distribution, widely expressed. Highly expressed in the brain and in mammary epithelial cell lines.

It localises to the endosome membrane. The protein localises to the late endosome membrane. The protein resides in the lysosome membrane. The enzyme catalyses Zn(2+)(in) + 2 H(+)(out) = Zn(2+)(out) + 2 H(+)(in). Probable proton-coupled zinc ion antiporter mediating zinc import from cytoplasm potentially into the endocytic compartment. Controls zinc deposition in milk. The protein is Probable proton-coupled zinc antiporter SLC30A4 of Mus musculus (Mouse).